Consider the following 191-residue polypeptide: Cytochrome c oxidase assembly protein CtaG (191 aa).

At 1–9 the chain is on the cytoplasmic side; it reads MSLSPHQKT. Residues 10 to 30 traverse the membrane as a helical; Signal-anchor for type II membrane protein segment; it reads AGGLVLVVAVMGAASFAAVPF. Residues 31-191 lie on the Periplasmic side of the membrane; it reads YNWFCRVTGF…LAAESATDVN (161 aa).

Belongs to the COX11/CtaG family.

The protein localises to the cell inner membrane. In terms of biological role, exerts its effect at some terminal stage of cytochrome c oxidase synthesis, probably by being involved in the insertion of the copper B into subunit I. In Cereibacter sphaeroides (strain ATCC 17023 / DSM 158 / JCM 6121 / CCUG 31486 / LMG 2827 / NBRC 12203 / NCIMB 8253 / ATH 2.4.1.) (Rhodobacter sphaeroides), this protein is Cytochrome c oxidase assembly protein CtaG.